Reading from the N-terminus, the 205-residue chain is uncharacterized protein (205 aa).

The first 18 residues, 1–18, serve as a signal peptide directing secretion; it reads MKASLALLSLLTAFTSHS.

This is an uncharacterized protein from Escherichia coli (strain K12).